Reading from the N-terminus, the 503-residue chain is Probable cytosol aminopeptidase (503 aa).

Mn(2+) contacts are provided by Lys-270 and Asp-275. Lys-282 is an active-site residue. Asp-293, Asp-352, and Glu-354 together coordinate Mn(2+). Arg-356 is a catalytic residue.

This sequence belongs to the peptidase M17 family. The cofactor is Mn(2+).

The protein localises to the cytoplasm. It catalyses the reaction Release of an N-terminal amino acid, Xaa-|-Yaa-, in which Xaa is preferably Leu, but may be other amino acids including Pro although not Arg or Lys, and Yaa may be Pro. Amino acid amides and methyl esters are also readily hydrolyzed, but rates on arylamides are exceedingly low.. It carries out the reaction Release of an N-terminal amino acid, preferentially leucine, but not glutamic or aspartic acids.. Functionally, presumably involved in the processing and regular turnover of intracellular proteins. Catalyzes the removal of unsubstituted N-terminal amino acids from various peptides. In Enterobacter sp. (strain 638), this protein is Probable cytosol aminopeptidase.